The chain runs to 220 residues: Adenylate kinase (220 aa).

ATP is bound at residue 12–17 (GAGKGT). Residues 32–62 (STGDIFRDIVKKENDELGKKIKEIMERGELV) are NMP. AMP-binding positions include Thr33, Arg38, 60 to 62 (ELV), 88 to 91 (GYPR), and Gln95. The tract at residues 129-166 (ARRICPKCGRIYNLISLPPKEDELCDDCKVKLVQREDD) is LID. Arg130 serves as a coordination point for ATP. Residues Cys133 and Cys136 each coordinate Zn(2+). ATP is bound at residue 139–140 (IY). Cys153 and Cys156 together coordinate Zn(2+). 2 residues coordinate AMP: Arg163 and Arg174. Ile202 contacts ATP.

It belongs to the adenylate kinase family. In terms of assembly, monomer.

It is found in the cytoplasm. The enzyme catalyses AMP + ATP = 2 ADP. The protein operates within purine metabolism; AMP biosynthesis via salvage pathway; AMP from ADP: step 1/1. In terms of biological role, catalyzes the reversible transfer of the terminal phosphate group between ATP and AMP. Plays an important role in cellular energy homeostasis and in adenine nucleotide metabolism. In Thermotoga petrophila (strain ATCC BAA-488 / DSM 13995 / JCM 10881 / RKU-1), this protein is Adenylate kinase.